The sequence spans 398 residues: 1-deoxy-D-xylulose 5-phosphate reductoisomerase (398 aa).

The NADPH site is built by Thr-11, Gly-12, Ser-13, Ile-14, Arg-38, Asn-39, and Asn-125. Lys-126 lines the 1-deoxy-D-xylulose 5-phosphate pocket. Glu-127 lines the NADPH pocket. Residue Asp-151 participates in Mn(2+) binding. Residues Ser-152, Glu-153, Ser-179, and His-202 each coordinate 1-deoxy-D-xylulose 5-phosphate. Glu-153 is a binding site for Mn(2+). Gly-208 lines the NADPH pocket. 1-deoxy-D-xylulose 5-phosphate contacts are provided by Ser-215, Asn-220, Lys-221, and Glu-224. Glu-224 contacts Mn(2+).

Belongs to the DXR family. Mg(2+) is required as a cofactor. Requires Mn(2+) as cofactor.

The catalysed reaction is 2-C-methyl-D-erythritol 4-phosphate + NADP(+) = 1-deoxy-D-xylulose 5-phosphate + NADPH + H(+). It functions in the pathway isoprenoid biosynthesis; isopentenyl diphosphate biosynthesis via DXP pathway; isopentenyl diphosphate from 1-deoxy-D-xylulose 5-phosphate: step 1/6. Its function is as follows. Catalyzes the NADPH-dependent rearrangement and reduction of 1-deoxy-D-xylulose-5-phosphate (DXP) to 2-C-methyl-D-erythritol 4-phosphate (MEP). In Burkholderia multivorans (strain ATCC 17616 / 249), this protein is 1-deoxy-D-xylulose 5-phosphate reductoisomerase.